The primary structure comprises 129 residues: Glycine cleavage system H protein (129 aa).

A Lipoyl-binding domain is found at 24 to 106 (LLKIGVSEFA…IGNGWLLIIK (83 aa)). An N6-lipoyllysine modification is found at lysine 65.

The protein belongs to the GcvH family. As to quaternary structure, the glycine cleavage system is composed of four proteins: P, T, L and H. The cofactor is (R)-lipoate.

Its function is as follows. The glycine cleavage system catalyzes the degradation of glycine. The H protein shuttles the methylamine group of glycine from the P protein to the T protein. The polypeptide is Glycine cleavage system H protein (Prochlorococcus marinus (strain MIT 9515)).